The primary structure comprises 237 residues: Large ribosomal subunit protein uL1 (237 aa).

The protein belongs to the universal ribosomal protein uL1 family. As to quaternary structure, part of the 50S ribosomal subunit.

Its function is as follows. Binds directly to 23S rRNA. The L1 stalk is quite mobile in the ribosome, and is involved in E site tRNA release. In terms of biological role, protein L1 is also a translational repressor protein, it controls the translation of the L11 operon by binding to its mRNA. The polypeptide is Large ribosomal subunit protein uL1 (Synechococcus elongatus (strain ATCC 33912 / PCC 7942 / FACHB-805) (Anacystis nidulans R2)).